We begin with the raw amino-acid sequence, 230 residues long: MSRATLDKNPHEVASMFDAVARRYDLTNTVLSLGQDRFWRRETCAALGIGPGDKVLDLAAGTAVSTVELAASGAWCVAADFSVGMLSAGRQRDVPKVAGDATRLPFADESFDAVTISFGLRNVVDHVAGLEEMARVTRPGGRLVVCEFSTPTNRAFATLYKEYLMKALPRMARAVASNPDAYVYLAESIRAWPDQAGLARRIEAAGWSQVRWRNLTGGIVALHAAVKPPR.

Residues Thr-62, Asp-80, 100-101, and Ser-117 each bind S-adenosyl-L-methionine; that span reads DA.

Belongs to the class I-like SAM-binding methyltransferase superfamily. MenG/UbiE family.

It catalyses the reaction a 2-demethylmenaquinol + S-adenosyl-L-methionine = a menaquinol + S-adenosyl-L-homocysteine + H(+). The protein operates within quinol/quinone metabolism; menaquinone biosynthesis; menaquinol from 1,4-dihydroxy-2-naphthoate: step 2/2. In terms of biological role, methyltransferase required for the conversion of demethylmenaquinol (DMKH2) to menaquinol (MKH2). The chain is Demethylmenaquinone methyltransferase from Mycobacterium sp. (strain JLS).